The following is a 459-amino-acid chain: Cysteine--tRNA ligase (459 aa).

Cys-28 provides a ligand contact to Zn(2+). Residues 30–40 carry the 'HIGH' region motif; sequence VTIYDLCHIGH. Positions 209, 234, and 238 each coordinate Zn(2+). A 'KMSKS' region motif is present at residues 266 to 270; the sequence is KMSKS. Lys-269 contributes to the ATP binding site.

The protein belongs to the class-I aminoacyl-tRNA synthetase family. In terms of assembly, monomer. Requires Zn(2+) as cofactor.

It is found in the cytoplasm. The enzyme catalyses tRNA(Cys) + L-cysteine + ATP = L-cysteinyl-tRNA(Cys) + AMP + diphosphate. The chain is Cysteine--tRNA ligase from Shewanella baltica (strain OS223).